The chain runs to 224 residues: Cytidylate kinase (224 aa).

Residue 11 to 19 (GPAAAGKST) coordinates ATP.

The protein belongs to the cytidylate kinase family. Type 1 subfamily.

Its subcellular location is the cytoplasm. The catalysed reaction is CMP + ATP = CDP + ADP. It carries out the reaction dCMP + ATP = dCDP + ADP. The sequence is that of Cytidylate kinase from Geobacillus kaustophilus (strain HTA426).